Reading from the N-terminus, the 278-residue chain is tRNA (guanine-N(7)-)-methyltransferase (278 aa).

A disordered region spans residues 1-42 (MRHDGPMHVQPGVGLQSDTSSSTGTGSGPADEPEAEKSAWGY). Residues Glu106, Glu131, Asn160, and Asp183 each contribute to the S-adenosyl-L-methionine site. Asp183 is an active-site residue. Substrate-binding positions include Lys187, Asp219, and 256 to 259 (TKYE).

This sequence belongs to the class I-like SAM-binding methyltransferase superfamily. TrmB family.

The catalysed reaction is guanosine(46) in tRNA + S-adenosyl-L-methionine = N(7)-methylguanosine(46) in tRNA + S-adenosyl-L-homocysteine. It functions in the pathway tRNA modification; N(7)-methylguanine-tRNA biosynthesis. Functionally, catalyzes the formation of N(7)-methylguanine at position 46 (m7G46) in tRNA. The chain is tRNA (guanine-N(7)-)-methyltransferase from Mycobacterium ulcerans (strain Agy99).